We begin with the raw amino-acid sequence, 162 residues long: Protein LTO1 (162 aa).

Residues 17-53 (GFLEGQNENIKQSFLEGKQYGLQVGFQRFTLLGQMEG) form a deca-GX3 motif; required for interaction with YAE1 and the CIA complex region.

This sequence belongs to the LTO1 family. In terms of assembly, forms a complex with YAE1; the complex bridges the interaction between the CIA complex and RLI1. Associates with the CIA complex (via its C-terminal tryptophan).

Its subcellular location is the nucleus. Its function is as follows. Essential for life in oxygen, but nonessential under anaerobic conditions. Required for biogenesis of the large ribosomal subunit and initiation of translation in oxygen. The complex LTO1:YAE1 functions as a target specific adapter that recruits apo-RLI1 to the cytosolic iron-sulfur protein assembly (CIA) complex machinery. This is Protein LTO1 from Saccharomyces cerevisiae (strain ATCC 204508 / S288c) (Baker's yeast).